The chain runs to 334 residues: Nucleoid-associated protein YPTS_1390 (334 aa).

The protein belongs to the YejK family.

The protein resides in the cytoplasm. The protein localises to the nucleoid. The chain is Nucleoid-associated protein YPTS_1390 from Yersinia pseudotuberculosis serotype IB (strain PB1/+).